We begin with the raw amino-acid sequence, 430 residues long: Phosphomethylpyrimidine synthase 2 (430 aa).

Substrate-binding positions include Asn-66, Met-95, Tyr-124, His-164, 186–188, 227–230, and Glu-266; these read SRG and DGFR. A Zn(2+)-binding site is contributed by His-270. Tyr-293 contacts substrate. His-334 lines the Zn(2+) pocket. [4Fe-4S] cluster is bound by residues Cys-411, Cys-414, and Cys-418.

It belongs to the ThiC family. In terms of assembly, homodimer. It depends on [4Fe-4S] cluster as a cofactor.

The enzyme catalyses 5-amino-1-(5-phospho-beta-D-ribosyl)imidazole + S-adenosyl-L-methionine = 4-amino-2-methyl-5-(phosphooxymethyl)pyrimidine + CO + 5'-deoxyadenosine + formate + L-methionine + 3 H(+). It participates in cofactor biosynthesis; thiamine diphosphate biosynthesis. Its function is as follows. Catalyzes the synthesis of the hydroxymethylpyrimidine phosphate (HMP-P) moiety of thiamine from aminoimidazole ribotide (AIR) in a radical S-adenosyl-L-methionine (SAM)-dependent reaction. The chain is Phosphomethylpyrimidine synthase 2 from Syntrophotalea carbinolica (strain DSM 2380 / NBRC 103641 / GraBd1) (Pelobacter carbinolicus).